Here is a 140-residue protein sequence, read N- to C-terminus: Large ribosomal subunit protein uL11 (140 aa).

This sequence belongs to the universal ribosomal protein uL11 family. Part of the ribosomal stalk of the 50S ribosomal subunit. Interacts with L10 and the large rRNA to form the base of the stalk. L10 forms an elongated spine to which L12 dimers bind in a sequential fashion forming a multimeric L10(L12)X complex. Post-translationally, one or more lysine residues are methylated.

Functionally, forms part of the ribosomal stalk which helps the ribosome interact with GTP-bound translation factors. The sequence is that of Large ribosomal subunit protein uL11 from Campylobacter hominis (strain ATCC BAA-381 / DSM 21671 / CCUG 45161 / LMG 19568 / NCTC 13146 / CH001A).